The chain runs to 414 residues: DNA primase small subunit PriS (414 aa).

Residues aspartate 98, aspartate 100, and aspartate 312 contribute to the active site.

Belongs to the eukaryotic-type primase small subunit family. As to quaternary structure, heterodimer of a small subunit (PriS) and a large subunit (PriL). Mg(2+) serves as cofactor. Mn(2+) is required as a cofactor.

In terms of biological role, catalytic subunit of DNA primase, an RNA polymerase that catalyzes the synthesis of short RNA molecules used as primers for DNA polymerase during DNA replication. The small subunit contains the primase catalytic core and has DNA synthesis activity on its own. Binding to the large subunit stabilizes and modulates the activity, increasing the rate of DNA synthesis while decreasing the length of the DNA fragments, and conferring RNA synthesis capability. The DNA polymerase activity may enable DNA primase to also catalyze primer extension after primer synthesis. May also play a role in DNA repair. This Methanosarcina barkeri (strain Fusaro / DSM 804) protein is DNA primase small subunit PriS.